Here is a 323-residue protein sequence, read N- to C-terminus: tRNA U34 carboxymethyltransferase (323 aa).

Carboxy-S-adenosyl-L-methionine contacts are provided by residues Lys-91, Trp-105, Lys-110, Gly-130, 181-182 (IE), Met-196, Tyr-200, and Arg-315.

Belongs to the class I-like SAM-binding methyltransferase superfamily. CmoB family. As to quaternary structure, homotetramer.

The catalysed reaction is carboxy-S-adenosyl-L-methionine + 5-hydroxyuridine(34) in tRNA = 5-carboxymethoxyuridine(34) in tRNA + S-adenosyl-L-homocysteine + H(+). Functionally, catalyzes carboxymethyl transfer from carboxy-S-adenosyl-L-methionine (Cx-SAM) to 5-hydroxyuridine (ho5U) to form 5-carboxymethoxyuridine (cmo5U) at position 34 in tRNAs. This Sodalis glossinidius (strain morsitans) protein is tRNA U34 carboxymethyltransferase.